The sequence spans 472 residues: Type I restriction enzyme BthVORF4518P methylase subunit (472 aa).

S-adenosyl-L-methionine contacts are provided by residues 151–156, 181–183, D214, and 243–244; these read QYFTPR, TGG, and DS.

Belongs to the N(4)/N(6)-methyltransferase family. In terms of assembly, the type I restriction/modification system is composed of three polypeptides R, M and S; the restriction enzyme has stoichiometry R(2)M(2)S(1) while the methyltransferase is M(2)S(1).

The enzyme catalyses a 2'-deoxyadenosine in DNA + S-adenosyl-L-methionine = an N(6)-methyl-2'-deoxyadenosine in DNA + S-adenosyl-L-homocysteine + H(+). In terms of biological role, the subtype gamma methyltransferase (M) subunit of a type I restriction enzyme. The M and S subunits together form a methyltransferase (MTase) that methylates two adenine residues of an undetermined sequence. In the presence of the R subunit the complex can also act as an endonuclease, binding to the same target sequence but cutting the DNA some distance from this site. Whether the DNA is cut or modified depends on the methylation state of the target sequence. When the target site is unmodified, the DNA is cut. When the target site is hemimethylated, the complex acts as a maintenance MTase modifying the DNA so that both strands become methylated. After locating a non-methylated recognition site, the enzyme complex serves as a molecular motor that translocates DNA in an ATP-dependent manner until a collision occurs that triggers cleavage. The protein is Type I restriction enzyme BthVORF4518P methylase subunit of Bacteroides thetaiotaomicron (strain ATCC 29148 / DSM 2079 / JCM 5827 / CCUG 10774 / NCTC 10582 / VPI-5482 / E50).